The primary structure comprises 512 residues: Maturase K (512 aa).

This sequence belongs to the intron maturase 2 family. MatK subfamily.

It is found in the plastid. Its subcellular location is the chloroplast. Its function is as follows. Usually encoded in the trnK tRNA gene intron. Probably assists in splicing its own and other chloroplast group II introns. This chain is Maturase K, found in Koelreuteria paniculata (Goldenrain tree).